A 433-amino-acid polypeptide reads, in one-letter code: Chaperone SurA (433 aa).

An N-terminal signal peptide occupies residues Met-1 to Ala-24. PpiC domains follow at residues Asn-173–Asp-274 and Ile-285–Asn-385.

It is found in the periplasm. The enzyme catalyses [protein]-peptidylproline (omega=180) = [protein]-peptidylproline (omega=0). Its function is as follows. Chaperone involved in the correct folding and assembly of outer membrane proteins. Recognizes specific patterns of aromatic residues and the orientation of their side chains, which are found more frequently in integral outer membrane proteins. May act in both early periplasmic and late outer membrane-associated steps of protein maturation. The polypeptide is Chaperone SurA (Baumannia cicadellinicola subsp. Homalodisca coagulata).